Consider the following 215-residue polypeptide: Adenylate kinase (215 aa).

Gly-10–Thr-15 contributes to the ATP binding site. An NMP region spans residues Ser-30 to Val-59. Residues Thr-31, Arg-36, Gly-57–Val-59, Gly-85–Arg-88, and Gln-92 contribute to the AMP site. Positions Gly-122–Asp-159 are LID. Residues Arg-123 and Val-132–Tyr-133 each bind ATP. Arg-156 and Arg-167 together coordinate AMP. Gly-201 provides a ligand contact to ATP.

The protein belongs to the adenylate kinase family. As to quaternary structure, monomer.

The protein resides in the cytoplasm. The catalysed reaction is AMP + ATP = 2 ADP. It participates in purine metabolism; AMP biosynthesis via salvage pathway; AMP from ADP: step 1/1. Catalyzes the reversible transfer of the terminal phosphate group between ATP and AMP. Plays an important role in cellular energy homeostasis and in adenine nucleotide metabolism. The polypeptide is Adenylate kinase (Ectopseudomonas mendocina (strain ymp) (Pseudomonas mendocina)).